A 136-amino-acid chain; its full sequence is Small ribosomal subunit protein uS19 (136 aa).

This sequence belongs to the universal ribosomal protein uS19 family.

Its function is as follows. Protein S19 forms a complex with S13 that binds strongly to the 16S ribosomal RNA. The protein is Small ribosomal subunit protein uS19 of Methanocorpusculum labreanum (strain ATCC 43576 / DSM 4855 / Z).